Consider the following 276-residue polypeptide: S-adenosylmethionine decarboxylase proenzyme (276 aa).

The active-site Schiff-base intermediate with substrate; via pyruvic acid is the Ser-124. Ser-124 carries the post-translational modification Pyruvic acid (Ser); by autocatalysis. The Proton acceptor; for processing activity role is filled by His-129. The active-site Proton donor; for catalytic activity is the Cys-152.

It belongs to the prokaryotic AdoMetDC family. Type 2 subfamily. In terms of assembly, heterooctamer of four alpha and four beta chains arranged as a tetramer of alpha/beta heterodimers. The cofactor is pyruvate. In terms of processing, is synthesized initially as an inactive proenzyme. Formation of the active enzyme involves a self-maturation process in which the active site pyruvoyl group is generated from an internal serine residue via an autocatalytic post-translational modification. Two non-identical subunits are generated from the proenzyme in this reaction, and the pyruvate is formed at the N-terminus of the alpha chain, which is derived from the carboxyl end of the proenzyme. The post-translation cleavage follows an unusual pathway, termed non-hydrolytic serinolysis, in which the side chain hydroxyl group of the serine supplies its oxygen atom to form the C-terminus of the beta chain, while the remainder of the serine residue undergoes an oxidative deamination to produce ammonia and the pyruvoyl group blocking the N-terminus of the alpha chain.

The catalysed reaction is S-adenosyl-L-methionine + H(+) = S-adenosyl 3-(methylsulfanyl)propylamine + CO2. The protein operates within amine and polyamine biosynthesis; S-adenosylmethioninamine biosynthesis; S-adenosylmethioninamine from S-adenosyl-L-methionine: step 1/1. Functionally, catalyzes the decarboxylation of S-adenosylmethionine to S-adenosylmethioninamine (dcAdoMet), the propylamine donor required for the synthesis of the polyamines spermine and spermidine from the diamine putrescine. The sequence is that of S-adenosylmethionine decarboxylase proenzyme from Desulfitobacterium hafniense (strain DSM 10664 / DCB-2).